Reading from the N-terminus, the 234-residue chain is Purine nucleoside phosphorylase DeoD-type (234 aa).

A purine D-ribonucleoside is bound at residue His-4. Phosphate contacts are provided by residues Gly-20, Arg-24, Arg-43, and Arg-87 to Thr-90. A purine D-ribonucleoside contacts are provided by residues Glu-179–Glu-181 and Ser-203–Asp-204. The active-site Proton donor is Asp-204.

Belongs to the PNP/UDP phosphorylase family. In terms of assembly, homohexamer; trimer of homodimers.

It carries out the reaction a purine D-ribonucleoside + phosphate = a purine nucleobase + alpha-D-ribose 1-phosphate. The enzyme catalyses a purine 2'-deoxy-D-ribonucleoside + phosphate = a purine nucleobase + 2-deoxy-alpha-D-ribose 1-phosphate. Its function is as follows. Catalyzes the reversible phosphorolytic breakdown of the N-glycosidic bond in the beta-(deoxy)ribonucleoside molecules, with the formation of the corresponding free purine bases and pentose-1-phosphate. The polypeptide is Purine nucleoside phosphorylase DeoD-type (Helicobacter pylori (strain Shi470)).